Here is a 309-residue protein sequence, read N- to C-terminus: Protein-L-isoaspartate O-methyltransferase (309 aa).

A disordered region spans residues 1-46 (MSGERAKRFPLALEDLKRAPRKSDGRAGERHAAIAAPKAADKPAAV). Positions 14-32 (EDLKRAPRKSDGRAGERHA) are enriched in basic and acidic residues. Positions 33–46 (AIAAPKAADKPAAV) are enriched in low complexity. The active site involves Ser-156.

Belongs to the methyltransferase superfamily. L-isoaspartyl/D-aspartyl protein methyltransferase family.

It is found in the cytoplasm. The catalysed reaction is [protein]-L-isoaspartate + S-adenosyl-L-methionine = [protein]-L-isoaspartate alpha-methyl ester + S-adenosyl-L-homocysteine. In terms of biological role, catalyzes the methyl esterification of L-isoaspartyl residues in peptides and proteins that result from spontaneous decomposition of normal L-aspartyl and L-asparaginyl residues. It plays a role in the repair and/or degradation of damaged proteins. This Burkholderia vietnamiensis (strain G4 / LMG 22486) (Burkholderia cepacia (strain R1808)) protein is Protein-L-isoaspartate O-methyltransferase.